We begin with the raw amino-acid sequence, 167 residues long: Nascent polypeptide-associated complex subunit beta (167 aa).

2 disordered regions span residues 1–48 (MDQA…GADD) and 133–167 (QNMQ…SKVE). The span at 25–42 (NRNRGKGTPRRKVKKVHK) shows a compositional bias: basic residues. Residues 45–110 (GADDKKLQAT…GEEKELTELV (66 aa)) form the NAC-A/B domain. A compositionally biased stretch (acidic residues) spans 148 to 161 (DEEDDIPDLVEGQD).

The protein belongs to the NAC-beta family. As to quaternary structure, part of the nascent polypeptide-associated complex (NAC), consisting of egd2 and egd1. NAC associates with ribosomes via egd1.

It is found in the cytoplasm. The protein resides in the nucleus. Component of the nascent polypeptide-associated complex (NAC), a dynamic component of the ribosomal exit tunnel, protecting the emerging polypeptides from interaction with other cytoplasmic proteins to ensure appropriate nascent protein targeting. The NAC complex also promotes mitochondrial protein import by enhancing productive ribosome interactions with the outer mitochondrial membrane and blocks the inappropriate interaction of ribosomes translating non-secretory nascent polypeptides with translocation sites in the membrane of the endoplasmic reticulum. EGD1 may act as a transcription factor that exert a negative effect on the expression of several genes that are transcribed by RNA polymerase II. The protein is Nascent polypeptide-associated complex subunit beta (egd1) of Aspergillus terreus (strain NIH 2624 / FGSC A1156).